Reading from the N-terminus, the 265-residue chain is Hydroxyethylthiazole kinase 2 (265 aa).

M39 contacts substrate. Positions 115 and 168 each coordinate ATP. G195 serves as a coordination point for substrate.

This sequence belongs to the Thz kinase family. Mg(2+) serves as cofactor.

It carries out the reaction 5-(2-hydroxyethyl)-4-methylthiazole + ATP = 4-methyl-5-(2-phosphooxyethyl)-thiazole + ADP + H(+). It functions in the pathway cofactor biosynthesis; thiamine diphosphate biosynthesis; 4-methyl-5-(2-phosphoethyl)-thiazole from 5-(2-hydroxyethyl)-4-methylthiazole: step 1/1. In terms of biological role, catalyzes the phosphorylation of the hydroxyl group of 4-methyl-5-beta-hydroxyethylthiazole (THZ). This chain is Hydroxyethylthiazole kinase 2, found in Clostridium botulinum (strain 657 / Type Ba4).